Consider the following 209-residue polypeptide: Probable phosphatidylglycerophosphatase, mitochondrial (209 aa).

Residues 57–61 carry the Phosphoryl acceptor motif; the sequence is DKDNC.

Belongs to the GEP4 family.

The protein resides in the mitochondrion inner membrane. The catalysed reaction is a 1,2-diacyl-sn-glycero-3-phospho-(1'-sn-glycero-3'-phosphate) + H2O = a 1,2-diacyl-sn-glycero-3-phospho-(1'-sn-glycerol) + phosphate. Its pathway is phospholipid metabolism; phosphatidylglycerol biosynthesis; phosphatidylglycerol from CDP-diacylglycerol: step 2/2. Functionally, phosphatidylglycerophosphatase involved in the biosynthesis of cardiolipin (CL), a unique dimeric phosphoglycerolipid predominantly present in mitochondrial membranes and which has important functions for cellular energy metabolism, mitochondrial dynamics and the initiation of apoptotic pathways. The sequence is that of Probable phosphatidylglycerophosphatase, mitochondrial (gep4) from Schizosaccharomyces pombe (strain 972 / ATCC 24843) (Fission yeast).